The sequence spans 188 residues: Threonylcarbamoyl-AMP synthase (188 aa).

The region spanning 3-188 is the YrdC-like domain; sequence QLHPSDIKDI…RSGKILRNGQ (186 aa).

It belongs to the SUA5 family. TsaC subfamily.

It is found in the cytoplasm. The enzyme catalyses L-threonine + hydrogencarbonate + ATP = L-threonylcarbamoyladenylate + diphosphate + H2O. Required for the formation of a threonylcarbamoyl group on adenosine at position 37 (t(6)A37) in tRNAs that read codons beginning with adenine. Catalyzes the conversion of L-threonine, HCO(3)(-)/CO(2) and ATP to give threonylcarbamoyl-AMP (TC-AMP) as the acyladenylate intermediate, with the release of diphosphate. The chain is Threonylcarbamoyl-AMP synthase from Shewanella baltica (strain OS155 / ATCC BAA-1091).